Reading from the N-terminus, the 537-residue chain is Beta-1-syntrophin (537 aa).

Residue Ala-2 is modified to N-acetylalanine. 2 consecutive PH domains span residues 18–297 (RAQR…SNAG) and 321–432 (EIRH…QGCH). Residues Ser-86, Ser-125, and Ser-204 each carry the phosphoserine modification. Positions 111–194 (GVKVLKQELG…EVLLEVKYMR (84 aa)) constitute a PDZ domain. The interval 204–233 (SPVSEIGWETPPPESPRLGGGSAEPLSSQS) is disordered. The residue at position 213 (Thr-213) is a Phosphothreonine. Residues Ser-218, Ser-225, Ser-231, Ser-235, and Ser-388 each carry the phosphoserine modification. Residues 481 to 537 (PYEKLKMSSDDGIRMLYLDFGGKEGEIQLDLHSCPKPIVFIIHSFLSAKITRLGLVA) form the SU domain. Positions 517–537 (PIVFIIHSFLSAKITRLGLVA) are calmodulin-binding.

This sequence belongs to the syntrophin family. In terms of assembly, monomer and homodimer. Interacts with the viral HTLV-1 TAX protein and other members of the syntrophin family: SNTA1 and SNTB2. Interacts with the dystrophin protein DMD and related proteins DTNA and UTRN and with the sodium channel proteins SCN4A and SCN5A. Interacts with DTNB. In terms of processing, phosphorylated by CaM-kinase II. Ubiquitous. Expressed at high levels in the liver.

It localises to the cell membrane. The protein localises to the sarcolemma. It is found in the cell junction. The protein resides in the cytoplasm. Its subcellular location is the cytoskeleton. In terms of biological role, adapter protein that binds to and probably organizes the subcellular localization of a variety of membrane proteins. May link various receptors to the actin cytoskeleton and the dystrophin glycoprotein complex. This Mus musculus (Mouse) protein is Beta-1-syntrophin (Sntb1).